We begin with the raw amino-acid sequence, 428 residues long: Enolase (428 aa).

(2R)-2-phosphoglycerate is bound at residue Gln163. Catalysis depends on Glu205, which acts as the Proton donor. Mg(2+) is bound by residues Asp242, Glu284, and Asp311. The (2R)-2-phosphoglycerate site is built by Lys336, Arg365, Ser366, and Lys387. The Proton acceptor role is filled by Lys336.

The protein belongs to the enolase family. Requires Mg(2+) as cofactor.

The protein resides in the cytoplasm. The protein localises to the secreted. It localises to the cell surface. The catalysed reaction is (2R)-2-phosphoglycerate = phosphoenolpyruvate + H2O. The protein operates within carbohydrate degradation; glycolysis; pyruvate from D-glyceraldehyde 3-phosphate: step 4/5. In terms of biological role, catalyzes the reversible conversion of 2-phosphoglycerate (2-PG) into phosphoenolpyruvate (PEP). It is essential for the degradation of carbohydrates via glycolysis. This is Enolase from Tropheryma whipplei (strain TW08/27) (Whipple's bacillus).